A 322-amino-acid polypeptide reads, in one-letter code: DNA-directed RNA polymerase subunit alpha (322 aa).

Residues 1 to 229 (MNFVNNLFTL…KYFDLIFSFI (229 aa)) form an alpha N-terminal domain (alpha-NTD) region. Residues 244 to 322 (NLNLKINSVY…NLNSKIEYDL (79 aa)) are alpha C-terminal domain (alpha-CTD).

Belongs to the RNA polymerase alpha chain family. As to quaternary structure, homodimer. The RNAP catalytic core consists of 2 alpha, 1 beta, 1 beta' and 1 omega subunit. When a sigma factor is associated with the core the holoenzyme is formed, which can initiate transcription.

It carries out the reaction RNA(n) + a ribonucleoside 5'-triphosphate = RNA(n+1) + diphosphate. Its function is as follows. DNA-dependent RNA polymerase catalyzes the transcription of DNA into RNA using the four ribonucleoside triphosphates as substrates. This Carsonella ruddii (strain PV) protein is DNA-directed RNA polymerase subunit alpha (rpoA).